A 795-amino-acid polypeptide reads, in one-letter code: Phenylalanine--tRNA ligase beta subunit (795 aa).

The tRNA-binding domain occupies 39 to 148; it reads AGRFTGVVVG…AEAPIGQDIR (110 aa). One can recognise a B5 domain in the interval 401–476; it reads PQPATITLRR…RVYGYDAIPN (76 aa). Residues Asp-454, Asp-460, Glu-463, and Glu-464 each coordinate Mg(2+). Positions 701-794 constitute an FDX-ACB domain; it reads SRFPANRRDI…LKQRFQASLR (94 aa).

Belongs to the phenylalanyl-tRNA synthetase beta subunit family. Type 1 subfamily. Tetramer of two alpha and two beta subunits. It depends on Mg(2+) as a cofactor.

It is found in the cytoplasm. It catalyses the reaction tRNA(Phe) + L-phenylalanine + ATP = L-phenylalanyl-tRNA(Phe) + AMP + diphosphate + H(+). This chain is Phenylalanine--tRNA ligase beta subunit, found in Sodalis glossinidius (strain morsitans).